The primary structure comprises 155 residues: 6,7-dimethyl-8-ribityllumazine synthase (155 aa).

Residues phenylalanine 22, 57–59 (AVE), and 81–83 (TVI) contribute to the 5-amino-6-(D-ribitylamino)uracil site. 86-87 (GT) is a (2S)-2-hydroxy-3-oxobutyl phosphate binding site. Histidine 89 acts as the Proton donor in catalysis. Phenylalanine 114 is a binding site for 5-amino-6-(D-ribitylamino)uracil. Residue arginine 128 participates in (2S)-2-hydroxy-3-oxobutyl phosphate binding.

It belongs to the DMRL synthase family. As to quaternary structure, forms an icosahedral capsid composed of 60 subunits, arranged as a dodecamer of pentamers.

The catalysed reaction is (2S)-2-hydroxy-3-oxobutyl phosphate + 5-amino-6-(D-ribitylamino)uracil = 6,7-dimethyl-8-(1-D-ribityl)lumazine + phosphate + 2 H2O + H(+). It functions in the pathway cofactor biosynthesis; riboflavin biosynthesis; riboflavin from 2-hydroxy-3-oxobutyl phosphate and 5-amino-6-(D-ribitylamino)uracil: step 1/2. Its function is as follows. Catalyzes the formation of 6,7-dimethyl-8-ribityllumazine by condensation of 5-amino-6-(D-ribitylamino)uracil with 3,4-dihydroxy-2-butanone 4-phosphate. This is the penultimate step in the biosynthesis of riboflavin. This chain is 6,7-dimethyl-8-ribityllumazine synthase, found in Psychromonas ingrahamii (strain DSM 17664 / CCUG 51855 / 37).